Reading from the N-terminus, the 434-residue chain is UDP-N-acetylglucosamine 1-carboxyvinyltransferase (434 aa).

22-23 is a binding site for phosphoenolpyruvate; the sequence is KN. Arg-93 provides a ligand contact to UDP-N-acetyl-alpha-D-glucosamine. Cys-117 serves as the catalytic Proton donor. The residue at position 117 (Cys-117) is a 2-(S-cysteinyl)pyruvic acid O-phosphothioketal. UDP-N-acetyl-alpha-D-glucosamine contacts are provided by Asp-307 and Val-329.

Belongs to the EPSP synthase family. MurA subfamily.

It is found in the cytoplasm. The enzyme catalyses phosphoenolpyruvate + UDP-N-acetyl-alpha-D-glucosamine = UDP-N-acetyl-3-O-(1-carboxyvinyl)-alpha-D-glucosamine + phosphate. The protein operates within cell wall biogenesis; peptidoglycan biosynthesis. Functionally, cell wall formation. Adds enolpyruvyl to UDP-N-acetylglucosamine. This chain is UDP-N-acetylglucosamine 1-carboxyvinyltransferase, found in Coxiella burnetii (strain CbuG_Q212) (Coxiella burnetii (strain Q212)).